A 316-amino-acid polypeptide reads, in one-letter code: Fe-S cluster assembly protein DRE2 (316 aa).

The tract at residues 7 to 139 (VSPPKRTLLL…PDYGDNEGAV (133 aa)) is N-terminal SAM-like domain. A linker region spans residues 140 to 208 (TLKFGLKKKN…EDTLMTEEDL (69 aa)). [2Fe-2S] cluster-binding residues include Cys218, Cys229, Cys232, and Cys234. The interval 218 to 234 (CQPKAGKRRRACKDCSC) is fe-S binding site A. Cys279, Cys282, Cys290, and Cys293 together coordinate [4Fe-4S] cluster. 2 short sequence motifs (cx2C motif) span residues 279–282 (CGNC) and 290–293 (CDGC). Positions 279–293 (CGNCSLGDAFRCDGC) are fe-S binding site B.

Belongs to the anamorsin family. In terms of assembly, monomer. Interacts with TAH18. Interacts with MIA40. It depends on [2Fe-2S] cluster as a cofactor. Requires [4Fe-4S] cluster as cofactor.

Its subcellular location is the cytoplasm. The protein localises to the mitochondrion intermembrane space. Its function is as follows. Component of the cytosolic iron-sulfur (Fe-S) protein assembly (CIA) machinery required for the maturation of extramitochondrial Fe-S proteins. Part of an electron transfer chain functioning in an early step of cytosolic Fe-S biogenesis, facilitating the de novo assembly of a [4Fe-4S] cluster on the scaffold complex CFD1-NBP35. Electrons are transferred to DRE2 from NADPH via the FAD- and FMN-containing protein TAH18. TAH18-DRE2 are also required for the assembly of the diferric tyrosyl radical cofactor of ribonucleotide reductase (RNR), probably by providing electrons for reduction during radical cofactor maturation in the catalytic small subunit RNR2. The sequence is that of Fe-S cluster assembly protein DRE2 from Fusarium vanettenii (strain ATCC MYA-4622 / CBS 123669 / FGSC 9596 / NRRL 45880 / 77-13-4) (Fusarium solani subsp. pisi).